The chain runs to 461 residues: Autophagy-related protein 6 (461 aa).

Over residues Glu75–Ser88 the composition is skewed to basic and acidic residues. 2 disordered regions span residues Glu75–Val94 and Glu101–Gly124. Over residues Pro103–Ser113 the composition is skewed to low complexity. A coiled-coil region spans residues Thr194–Asn286.

Belongs to the beclin family.

Required for cytoplasm to vacuole transport (Cvt) and autophagy. Also involved in endosome-to-Golgi retrograde transport. The sequence is that of Autophagy-related protein 6 (ATG6) from Meyerozyma guilliermondii (strain ATCC 6260 / CBS 566 / DSM 6381 / JCM 1539 / NBRC 10279 / NRRL Y-324) (Yeast).